The chain runs to 769 residues: Post-GPI attachment to proteins factor 6 (769 aa).

Positions 1–33 are cleaved as a signal peptide; the sequence is MGRVGAGGTAREAATGSLLLLLLLLARPPPAAA. Residues 34 to 543 lie on the Extracellular side of the membrane; it reads SNSKESEAGL…STAQTVAQQR (510 aa). 2 N-linked (GlcNAc...) asparagine glycosylation sites follow: Asn-138 and Asn-411. The EGF-like domain occupies 495–531; it reads PCLNDCGPYGQCLLLRRYGYVYAGCSCKAGWRGWSCT. Disulfide bonds link Cys-496/Cys-506, Cys-500/Cys-519, and Cys-521/Cys-530. The chain crosses the membrane as a helical span at residues 544–564; it reads AAALLLTLSNLMFLAPIAISL. The Cytoplasmic segment spans residues 565-567; sequence HRS. Residues 568 to 588 traverse the membrane as a helical segment; it reads FLVEASVYFYTMFFSTFYHAC. Residues 589–603 lie on the Extracellular side of the membrane; it reads DQPGEAVLCILSYDT. The chain crosses the membrane as a helical span at residues 604–624; sequence LQYCDFLGSGASTWVTILCMA. Topologically, residues 625 to 627 are cytoplasmic; the sequence is RLK. Residues 628-648 traverse the membrane as a helical segment; sequence TILKQVLLVLGTLVIAMSLQM. Over 649-651 the chain is Extracellular; that stretch reads DRR. Residues 652–672 form a helical membrane-spanning segment; sequence GIWNLMGPCVFAFVIMASMWI. Residues 673–688 are Cytoplasmic-facing; sequence YRCGHRGQCYPTSWQR. A helical transmembrane segment spans residues 689-709; that stretch reads WVFYLLPGISMASVGIAMYTS. Topologically, residues 710–715 are extracellular; it reads MMTSDN. The helical transmembrane segment at 716–736 threads the bilayer; it reads YYYTHSIWHILLAGSAAFLLP. Residues 737-769 are Cytoplasmic-facing; that stretch reads PREEKAGSWACLQKFPCHYQICRNDRDELYTVT.

It belongs to the TMEM8 family. Post-translationally, glycosylated.

It localises to the cell membrane. The protein localises to the lysosome membrane. The catalysed reaction is a 1,2-diacyl-sn-glycero-3-phosphocholine + H2O = a 1-acyl-sn-glycero-3-phosphocholine + a fatty acid + H(+). In terms of biological role, involved in the lipid remodeling steps of GPI-anchor maturation. Lipid remodeling steps consist in the generation of 2 saturated fatty chains at the sn-2 position of GPI-anchor proteins (GPI-AP). Has phospholipase A2 activity that removes an acyl-chain at the sn-2 position of GPI-anchors during the remodeling of GPI. Required for the shedding of the GPI-AP CRIPTO, but not CFC1, at the cell surface. Shedding of CRIPTO modulates Nodal signaling by allowing soluble CRIPTO to act as a Nodal coreceptor on other cells. Also indirectly involved in the translocation of RAC1 from the cytosol to the plasma membrane by maintaining the steady state amount of CAV1-enriched plasma membrane subdomains, stabilizing RAC1 at the plasma membrane. The polypeptide is Post-GPI attachment to proteins factor 6 (Mus musculus (Mouse)).